A 325-amino-acid polypeptide reads, in one-letter code: MNSVEIIGTGSYVPEKIVTNEDMSKIVDTSDEWISSRTGIKERRISINENTSDLGAKAALRAIEDSNIKPEEIDLIIVATTSPDSYTPSVACIVQEKIGAKNAACFDLNAACTGFIFALNTASQFIKTGEYKTALVVGTEVLSKILDWQDRGTCVLFGDGAGAVIIRGGDENGIIKACLGSDGTGKDFLHCPATNVINPFSDEKGLASSKISMNGREVFKFAVKVMVSSVKKVIEDSGLNIEDIDYIVPHQANIRIIEFAAKKLGLSMDKFFINLQNYGNTSGATIPLAIDEMNKKGLLKRGAKIVVVGFGGGLTWGSMVLKWTK.

Residues Cys-112 and His-250 contribute to the active site. The ACP-binding stretch occupies residues 251–255; that stretch reads QANIR. Asn-280 is an active-site residue.

Belongs to the thiolase-like superfamily. FabH family. As to quaternary structure, homodimer.

The protein localises to the cytoplasm. It catalyses the reaction malonyl-[ACP] + acetyl-CoA + H(+) = 3-oxobutanoyl-[ACP] + CO2 + CoA. The protein operates within lipid metabolism; fatty acid biosynthesis. Functionally, catalyzes the condensation reaction of fatty acid synthesis by the addition to an acyl acceptor of two carbons from malonyl-ACP. Catalyzes the first condensation reaction which initiates fatty acid synthesis and may therefore play a role in governing the total rate of fatty acid production. Possesses both acetoacetyl-ACP synthase and acetyl transacylase activities. Its substrate specificity determines the biosynthesis of branched-chain and/or straight-chain of fatty acids. The protein is Beta-ketoacyl-[acyl-carrier-protein] synthase III of Clostridium acetobutylicum (strain ATCC 824 / DSM 792 / JCM 1419 / IAM 19013 / LMG 5710 / NBRC 13948 / NRRL B-527 / VKM B-1787 / 2291 / W).